The following is a 798-amino-acid chain: ABC transporter G family member 4 (798 aa).

Residues 1–51 form a disordered region; that stretch reads MEDIGNNNFEIIDDKSDEKNDENFEDKNSRNNINEEQILSNQQQQQQQQQQ. Residues 12–29 show a composition bias toward basic and acidic residues; it reads IDDKSDEKNDENFEDKNS. A compositionally biased stretch (polar residues) spans 30 to 41; it reads RNNINEEQILSN. Positions 34 to 83 form a coiled coil; it reads NEEQILSNQQQQQQQQQQQQQQQQQQQQQQQQQQQQQQEQQQFKNEVINT. A compositionally biased stretch (low complexity) spans 42–51; sequence QQQQQQQQQQ. The 254-residue stretch at 211-464 folds into the ABC transporter domain; the sequence is IDIEDIESQV…SIDSNYKCPP (254 aa). 253 to 260 contributes to the ATP binding site; sequence GPSGSGKS. Helical transmembrane passes span 540-560, 579-599, 628-648, 656-676, 687-707, 713-733, and 771-791; these read VVFF…SACF, LFFF…STFV, IVSS…IVHL, ILSL…VIAM, FSYC…LVPI, SFGW…IVII, and SIGI…IGLY. The ABC transmembrane type-2 domain occupies 540–793; the sequence is VVFFSKIVIA…ILAYIGLYKF (254 aa).

This sequence belongs to the ABC transporter superfamily. ABCG family. Eye pigment precursor importer (TC 3.A.1.204) subfamily.

The protein localises to the membrane. This Dictyostelium discoideum (Social amoeba) protein is ABC transporter G family member 4 (abcG4).